The primary structure comprises 815 residues: SNF1 protein kinase subunit beta-1 (815 aa).

Over residues 1-11 (MGNSPSTQDPS) the composition is skewed to polar residues. 2 disordered regions span residues 1–88 (MGNS…TIDK) and 120–146 (HDVG…TVKR). Gly2 is lipidated: N-myristoyl glycine. Over residues 12-31 (HSTKKEHGHHFHDAFNKDRQ) the composition is skewed to basic and acidic residues. Over residues 32-42 (GSITSQLFNNR) the composition is skewed to polar residues. A Phosphoserine modification is found at Ser33. Composition is skewed to basic and acidic residues over residues 72–88 (PSTD…TIDK) and 120–129 (HDVGAPEEQV). Phosphoserine occurs at positions 181, 198, 200, 206, 209, and 220. Disordered stretches follow at residues 311 to 335 (HANN…NDDF), 363 to 389 (HHNK…FASL), and 410 to 444 (PLHP…SSIS). Positions 313–326 (NNNGNIENNTRNKG) are enriched in low complexity. Ser331 carries the phosphoserine modification. Basic residues predominate over residues 363 to 376 (HHNKTKKAQSKKIR). 2 stretches are compositionally biased toward low complexity: residues 377 to 389 (SASN…FASL) and 433 to 444 (HSNSMSSMSSIS). Residues 473-716 (VSTDIASALK…LQQGGNIDAE (244 aa)) form a kinase-interacting sequence (KIS); required for interaction with SNF1 region. 2 positions are modified to phosphoserine: Ser494 and Ser497. Positions 581-616 (EPTLDEELPKRPELKRFPSSSRKSSYYSAKGVERPS) are disordered. The segment covering 587–596 (ELPKRPELKR) has biased composition (basic and acidic residues). Positions 599–608 (SSSRKSSYYS) are enriched in low complexity. At Ser643 the chain carries Phosphoserine. The segment at 724-804 (SRYPVPDLPI…FITQVVYAPC (81 aa)) is association with SNF1 kinase complex (ASC) domain; required for interaction with SNF4.

The protein belongs to the 5'-AMP-activated protein kinase beta subunit family. As to quaternary structure, component of the SNF1 kinase complex, a heterotrimeric complex composed of the catalytic alpha subunit SNF1, one of the three related beta subunits SIP1, SIP2 or GAL83, and the regulatory gamma subunit SNF4. The beta subunit serves as a bridge between the catalytic and the regulatory subunit. Interacts (via KIS domain) with SNF1. Interacts (via ASC domain) with SNF4. In terms of processing, phosphorylated by SNF1 in vitro.

Its subcellular location is the cytoplasm. It is found in the vacuole membrane. Its function is as follows. Beta subunit of the SNF1 kinase complex, which is required for transcriptional, metabolic, and developmental adaptations in response to glucose limitation. Has a structural role, mediating heterotrimer formation, and a regulatory role, defining carbon source-regulated subcellular location and substrate specificity of the SNF1 kinase complex. Promotes the PKA-regulated relocalization of the SNF1 kinase complex to the vacuolar membrane in response to various types of carbon stress. In Saccharomyces cerevisiae (strain RM11-1a) (Baker's yeast), this protein is SNF1 protein kinase subunit beta-1 (SIP1).